The chain runs to 538 residues: MSIINDENGRGYKVHLCKTNIAQNNNKFYDMELLDEGGDFIVKLINGRIGYRGVTQLKDFDDLDRAKKFFESKFYEKTHLHWEERDDEPVPNKYAVVELATNARQTEKEVKKEEPEPEPKVDEKNTRGRKKRGIVKEKKEIKKEEEPVEEVNEKLKELMKCICDEDVHLGLLKQLKFNEAFGRPIDCLSLAQLTTGYEILSKIEESIGGKSARRSTRGRPRVADRVLAVKSDGPSLHDINKYYSLIPHSFGFCVPPKIDSHAKIQAERELLDALKGSIEASLELKDLKKTASSKDIYQRLYERLPCHLEPVSEEIAGKIGDCLAMRGPTHCYKLSLIDAFELKDPNEIPTEAPVEVQEVPKKRGRKSTKTAAPTVPPPTTKRLLWHGTRVTNVFSILMNGLQFPVGDRCGLMFGNGVYFANVPTKSANYCCPEASKRVFMLLCEVETANPLVLYESEIDADEKMEKAKKTSVYAAGKHTPRDTVEINGIPAFKSNLETIEEETRLLYDEYVMFNKEHFKIKYVVEVKVDRLTAKEMMA.

The 94-residue stretch at 1 to 94 (MSIINDENGR…RDDEPVPNKY (94 aa)) folds into the WGR domain. Residues 104–133 (RQTEKEVKKEEPEPEPKVDEKNTRGRKKRG) are disordered. Over residues 105–126 (QTEKEVKKEEPEPEPKVDEKNT) the composition is skewed to basic and acidic residues. Residues 148 to 285 (VEEVNEKLKE…GSIEASLELK (138 aa)) form the PARP alpha-helical domain. Residues 309-535 (EPVSEEIAGK…VKVDRLTAKE (227 aa)) enclose the PARP catalytic domain. Positions 357–381 (QEVPKKRGRKSTKTAAPTVPPPTTK) are disordered.

This sequence belongs to the ARTD/PARP family.

Its subcellular location is the nucleus. The enzyme catalyses NAD(+) + (ADP-D-ribosyl)n-acceptor = nicotinamide + (ADP-D-ribosyl)n+1-acceptor + H(+).. The catalysed reaction is L-aspartyl-[protein] + NAD(+) = 4-O-(ADP-D-ribosyl)-L-aspartyl-[protein] + nicotinamide. It catalyses the reaction L-glutamyl-[protein] + NAD(+) = 5-O-(ADP-D-ribosyl)-L-glutamyl-[protein] + nicotinamide. Inhibited by N-(6-oxo-5,6-dihydrophenanthridin-2-yl)-N,N-dimethylacetamide HCl (PJ34), 1,5-dihydroxyisoquinoline (DHQ) and 3-aminobenzamide (3AB). In terms of biological role, poly[ADP-ribose] polymerase modifies various nuclear proteins by poly(ADP-ribosyl)ation, a post-translational modification synthesized after DNA damage that appears as an obligatory step in a detection/signaling pathway leading to the reparation of DNA strand breaks and programmed cell death. The protein is Poly [ADP-ribose] polymerase 2 of Caenorhabditis elegans.